The chain runs to 152 residues: UPF0756 membrane protein PEPE_1090 (152 aa).

4 consecutive transmembrane segments (helical) span residues 4 to 24, 52 to 72, 85 to 105, and 115 to 135; these read WLFL…SLII, WGVT…KIGF, WIAV…VGFL, and LVMG…GPII.

Belongs to the UPF0756 family.

It is found in the cell membrane. In Pediococcus pentosaceus (strain ATCC 25745 / CCUG 21536 / LMG 10740 / 183-1w), this protein is UPF0756 membrane protein PEPE_1090.